We begin with the raw amino-acid sequence, 159 residues long: Ribosomal RNA large subunit methyltransferase H (159 aa).

S-adenosyl-L-methionine is bound by residues Leu-76, Gly-108, and 127–132 (FGLLTL).

This sequence belongs to the RNA methyltransferase RlmH family. As to quaternary structure, homodimer.

The protein resides in the cytoplasm. It carries out the reaction pseudouridine(1915) in 23S rRNA + S-adenosyl-L-methionine = N(3)-methylpseudouridine(1915) in 23S rRNA + S-adenosyl-L-homocysteine + H(+). Functionally, specifically methylates the pseudouridine at position 1915 (m3Psi1915) in 23S rRNA. In Streptococcus pyogenes serotype M5 (strain Manfredo), this protein is Ribosomal RNA large subunit methyltransferase H.